Here is a 227-residue protein sequence, read N- to C-terminus: Ribonuclease HII (227 aa).

The region spanning 16-205 (SLLAGVDEVG…VKMALDAVGV (190 aa)) is the RNase H type-2 domain. A divalent metal cation contacts are provided by Asp22, Glu23, and Asp114.

It belongs to the RNase HII family. It depends on Mn(2+) as a cofactor. Mg(2+) serves as cofactor.

It is found in the cytoplasm. It catalyses the reaction Endonucleolytic cleavage to 5'-phosphomonoester.. Its function is as follows. Endonuclease that specifically degrades the RNA of RNA-DNA hybrids. In Marinobacter nauticus (strain ATCC 700491 / DSM 11845 / VT8) (Marinobacter aquaeolei), this protein is Ribonuclease HII.